Reading from the N-terminus, the 570-residue chain is Serine/threonine-protein kinase STY17 (570 aa).

The tract at residues 112–145 is disordered; the sequence is LNGNSGDVDPSDPAVNEDAQSSYNSRSLAPPTFG. Residues 129 to 145 are compositionally biased toward polar residues; it reads DAQSSYNSRSLAPPTFG. In terms of domain architecture, ACT spans 180-260; it reads EITFSTIDRP…PCSKQKSITF (81 aa). The Protein kinase domain maps to 292–545; sequence LKIEKKVACG…EIIEMLNQLI (254 aa). ATP-binding positions include 298–306 and lysine 319; that span reads VACGSYGEL. Catalysis depends on aspartate 413, which acts as the Proton acceptor. Phosphoserine is present on serine 441. Position 445 is a phosphothreonine (threonine 445).

Belongs to the protein kinase superfamily. Ser/Thr protein kinase family. In terms of processing, autophosphorylated on serine and threonine residues. Autophosphorylated at Thr-445.

It localises to the cytoplasm. The protein localises to the cytosol. The catalysed reaction is L-seryl-[protein] + ATP = O-phospho-L-seryl-[protein] + ADP + H(+). The enzyme catalyses L-threonyl-[protein] + ATP = O-phospho-L-threonyl-[protein] + ADP + H(+). With respect to regulation, activated by autophosphorylation at Thr-445. In terms of biological role, serine/threonine protein kinase that specifically phosphorylates chloroplast precursor proteins in the cytosol within the cleavable presequences (transit peptides). May be part of a cytosolic regulatory network involved in chloroplast protein import. Does not phosphorylate mitochondrion precursor proteins. Specific for ATP and does not utilize other NTPs. Plays a role in chloroplast biogenesis and differentiation in cotyledons, possibly through phosphorylation of chloroplast preproteins. The polypeptide is Serine/threonine-protein kinase STY17 (Arabidopsis thaliana (Mouse-ear cress)).